The chain runs to 279 residues: Pleckstrin homology domain-containing family F member 1 (279 aa).

One can recognise a PH domain in the interval 35–131 (VLLGEGVLTK…WISHIEECVR (97 aa)). Residues 152–212 (DKATDICMRC…VCSLCYRELA (61 aa)) form an FYVE-type zinc finger. Zn(2+) contacts are provided by Cys-158, Cys-161, Cys-175, Cys-178, Cys-183, Cys-186, Cys-204, and Cys-207. The tract at residues 219–264 (EAKERFRGSPGQLTHLGSTMCGASSGDDDDSDEDREGSGDGDWPTQ) is disordered. A compositionally biased stretch (acidic residues) spans 244–253 (GDDDDSDEDR).

The protein localises to the nucleus. It is found in the cytoplasm. The protein resides in the perinuclear region. It localises to the lysosome. Functionally, may induce apoptosis through the lysosomal-mitochondrial pathway. Translocates to the lysosome initiating the permeabilization of lysosomal membrane (LMP) and resulting in the release of CTSD and CTSL to the cytoplasm. Triggers the caspase-independent apoptosis by altering mitochondrial membrane permeabilization (MMP) resulting in the release of PDCD8. The sequence is that of Pleckstrin homology domain-containing family F member 1 (Plekhf1) from Rattus norvegicus (Rat).